Consider the following 123-residue polypeptide: Small ribosomal subunit protein uS13 (123 aa).

Positions 94–123 (RRGLPVRGQHTKNNARTRKGPARAIAGKKK) are disordered.

This sequence belongs to the universal ribosomal protein uS13 family. In terms of assembly, part of the 30S ribosomal subunit. Forms a loose heterodimer with protein S19. Forms two bridges to the 50S subunit in the 70S ribosome.

Located at the top of the head of the 30S subunit, it contacts several helices of the 16S rRNA. In the 70S ribosome it contacts the 23S rRNA (bridge B1a) and protein L5 of the 50S subunit (bridge B1b), connecting the 2 subunits; these bridges are implicated in subunit movement. Contacts the tRNAs in the A and P-sites. The chain is Small ribosomal subunit protein uS13 from Oenococcus oeni (strain ATCC BAA-331 / PSU-1).